The chain runs to 396 residues: Phospholipase A1-II 4 (396 aa).

The active-site Acyl-ester intermediate is Ser221. Active-site charge relay system residues include Ser221, Asp282, and His319.

It belongs to the AB hydrolase superfamily. Lipase family.

The protein resides in the cytoplasm. In terms of biological role, acylhydrolase that catalyzes the hydrolysis of phospholipids at the sn-1 position. This chain is Phospholipase A1-II 4, found in Oryza sativa subsp. japonica (Rice).